The following is a 564-amino-acid chain: Pyruvate decarboxylase (564 aa).

Residues Asp-28 and His-115 each contribute to the pyruvate site. Residues Thr-390 and 413 to 415 (GSI) contribute to the thiamine diphosphate site. Asp-444 is a binding site for Mg(2+). Residues 445–446 (GS) and 471–476 (NDGYTI) contribute to the thiamine diphosphate site. Mg(2+) contacts are provided by Asn-471 and Gly-473. Glu-477 contacts pyruvate.

This sequence belongs to the TPP enzyme family. Homotetramer. Mg(2+) serves as cofactor. Requires thiamine diphosphate as cofactor.

The catalysed reaction is a 2-oxocarboxylate + H(+) = an aldehyde + CO2. It catalyses the reaction pyruvate + H(+) = acetaldehyde + CO2. In Candida glabrata (strain ATCC 2001 / BCRC 20586 / JCM 3761 / NBRC 0622 / NRRL Y-65 / CBS 138) (Yeast), this protein is Pyruvate decarboxylase (PDC1).